Reading from the N-terminus, the 160-residue chain is MRRTIMSTEKINFDIHKILTLLPHRYPILLVDRVLELEPHKSIKALKNVTVNEPFFTGHFPKRPVMPGVLIIEALAQAAALLTFAEAEPKDPENTLYYFVGIDNARFKRVVEPGDQLILNVTFERYIRGIWKFKAVAEVDGKVAAEAELMCTVKTADAAP.

His59 is an active-site residue.

This sequence belongs to the thioester dehydratase family. FabZ subfamily.

Its subcellular location is the cytoplasm. It catalyses the reaction a (3R)-hydroxyacyl-[ACP] = a (2E)-enoyl-[ACP] + H2O. In terms of biological role, involved in unsaturated fatty acids biosynthesis. Catalyzes the dehydration of short chain beta-hydroxyacyl-ACPs and long chain saturated and unsaturated beta-hydroxyacyl-ACPs. This Burkholderia thailandensis (strain ATCC 700388 / DSM 13276 / CCUG 48851 / CIP 106301 / E264) protein is 3-hydroxyacyl-[acyl-carrier-protein] dehydratase FabZ.